The following is a 603-amino-acid chain: UvrABC system protein C (603 aa).

The region spanning 15–92 (DQPGCYLMKD…IKKHDPRFNI (78 aa)) is the GIY-YIG domain. Residues 197–232 (KTVKNDLMKKMQEAAENMEFEKAGEFRDQINAIETT) form the UVR domain.

The protein belongs to the UvrC family. In terms of assembly, interacts with UvrB in an incision complex.

Its subcellular location is the cytoplasm. Functionally, the UvrABC repair system catalyzes the recognition and processing of DNA lesions. UvrC both incises the 5' and 3' sides of the lesion. The N-terminal half is responsible for the 3' incision and the C-terminal half is responsible for the 5' incision. This chain is UvrABC system protein C, found in Listeria monocytogenes serotype 4b (strain CLIP80459).